The following is a 40-amino-acid chain: uncharacterized protein (40 aa).

Residues 1 to 14 (MNRMLSLSVQSQRA) are compositionally biased toward polar residues. The segment at 1–25 (MNRMLSLSVQSQRAPASPSPYGLKI) is disordered.

This is an uncharacterized protein from Treponema pallidum (strain Nichols).